Consider the following 68-residue polypeptide: UPF0253 protein AHA_2115 (68 aa).

The protein belongs to the UPF0253 family.

This chain is UPF0253 protein AHA_2115, found in Aeromonas hydrophila subsp. hydrophila (strain ATCC 7966 / DSM 30187 / BCRC 13018 / CCUG 14551 / JCM 1027 / KCTC 2358 / NCIMB 9240 / NCTC 8049).